A 387-amino-acid chain; its full sequence is O-methyltransferase lepI (387 aa).

135–148 contacts substrate; that stretch reads FENLWPVLMALPDF. The interval 175–195 is substrate binding; that stretch reads CFHWLATQPTRIANFKVLLTD. Residues 227 to 228, D252, 275 to 276, and R291 each bind S-adenosyl-L-methionine; these read GG and NF.

Belongs to the class I-like SAM-binding methyltransferase superfamily. Cation-independent O-methyltransferase family.

Its function is as follows. O-methyltransferase; part of the gene cluster 23 that mediates the biosynthesis of a family of 2-pyridones known as leporins. The hybrid PKS-NRPS synthetase lepA and the enoyl reductase lepG are responsible for fusion of phenylalanine with a hexaketide and subsequent release of the stable tetramic acid precursor, pre-leporin C. Because lepA lacks a designated enoylreductase (ER) domain, the required activity is provided the enoyl reductase lepG. It is possible that the dehydrogenase lepF also participates in production of pre-leporin C. Cytochrome P450 monooxygenase lepH is then required for the ring expansion step to yield leporin C. Leporin C is then presumably further oxidized by the N-hydroxylase lepD to form leporin B. LepI may possess a function in biosynthesis upstream of lepA. Leporin B is further oxidized in the presence of ferric ion to give the leporin B trimer-iron chelate, but whether or not this reaction is catalyzed by an enzyme in the pathway or by ferric ion is not determined yet. The protein is O-methyltransferase lepI of Aspergillus flavus (strain ATCC 200026 / FGSC A1120 / IAM 13836 / NRRL 3357 / JCM 12722 / SRRC 167).